Here is a 96-residue protein sequence, read N- to C-terminus: CLAVATA3/ESR (CLE)-related protein 43 (96 aa).

A signal peptide spans 1-28; it reads MGCRDILLTFSVALLLISLFQIWLFREG. The disordered stretch occupies residues 71 to 96; that stretch reads FGLNNTNSRFEDSNRRIPSSPDRLHN. N-linked (GlcNAc...) asparagine glycosylation occurs at asparagine 74. Hydroxyproline is present on residues proline 88 and proline 91. The O-linked (Ara...) hydroxyproline glycan is linked to proline 91.

The protein belongs to the CLV3/ESR signal peptide family. In terms of processing, the O-glycosylation (arabinosylation) of the hydroxyproline Pro-91 enhances binding affinity of the CLE43p peptide for its receptor. Expressed at low levels in seedlings.

The protein localises to the secreted. Its subcellular location is the extracellular space. Extracellular signal peptide that regulates cell fate. Promotes pollen tube growth prolongation in a SKM1 and SKM2-dependent manner, especially under relatively high temperature (at 30 degrees Celsius), thus conferring tolerance against high temperature probably through the maintenance of mitochondrial activity. This is CLAVATA3/ESR (CLE)-related protein 43 from Arabidopsis thaliana (Mouse-ear cress).